The primary structure comprises 884 residues: Bifunctional heparan sulfate N-deacetylase/N-sulfotransferase 2 (884 aa).

Topologically, residues 1–18 are cytoplasmic; that stretch reads MLKLWKVVRPARQLELHR. The helical; Signal-anchor for type II membrane protein transmembrane segment at 19–39 threads the bilayer; that stretch reads LILLLIAFSLGSMGFLAYYVS. Over 40–884 the chain is Lumenal; it reads TSPKAKEPLP…REELQHSSSG (845 aa). The segment at 41 to 598 is heparan sulfate N-deacetylase 2; that stretch reads SPKAKEPLPL…KRHKDIWSKE (558 aa). Residues 49 to 82 are disordered; that stretch reads PLPLGDCSSSGAAGGPGPVRPPVPPRPPRPPETA. Over residues 66–79 the composition is skewed to pro residues; it reads PVRPPVPPRPPRPP. N-linked (GlcNAc...) asparagine glycosylation is found at N351 and N401. The tract at residues 599 to 884 is heparan sulfate N-sulfotransferase 2; that stretch reads KTCDRLPKFL…REELQHSSSG (286 aa). K614 serves as the catalytic For sulfotransferase activity. Residue 614 to 618 participates in 3'-phosphoadenylyl sulfate binding; the sequence is KTGTT. N667 is a glycosylation site (N-linked (GlcNAc...) asparagine). S712 lines the 3'-phosphoadenylyl sulfate pocket. Residues N727 and N803 are each glycosylated (N-linked (GlcNAc...) asparagine). C818 and C828 are joined by a disulfide. 833-837 contributes to the 3'-phosphoadenylyl sulfate binding site; it reads KGRKY.

This sequence belongs to the sulfotransferase 1 family. NDST subfamily. As to quaternary structure, monomer.

The protein resides in the golgi apparatus membrane. The enzyme catalyses alpha-D-glucosaminyl-[heparan sulfate](n) + 3'-phosphoadenylyl sulfate = N-sulfo-alpha-D-glucosaminyl-[heparan sulfate](n) + adenosine 3',5'-bisphosphate + 2 H(+). The protein operates within glycan metabolism; heparan sulfate biosynthesis. It participates in glycan metabolism; heparin biosynthesis. In terms of biological role, essential bifunctional enzyme that catalyzes both the N-deacetylation and the N-sulfation of glucosamine (GlcNAc) of the glycosaminoglycan in heparan sulfate. Modifies the GlcNAc-GlcA disaccharide repeating sugar backbone to make N-sulfated heparosan, a prerequisite substrate for later modifications in heparin biosynthesis. Plays a role in determining the extent and pattern of sulfation of heparan sulfate. Required for the exosomal release of SDCBP, CD63 and syndecan. The polypeptide is Bifunctional heparan sulfate N-deacetylase/N-sulfotransferase 2 (NDST2) (Bos taurus (Bovine)).